We begin with the raw amino-acid sequence, 233 residues long: Lipoprotein-releasing system ATP-binding protein LolD (233 aa).

The region spanning 10-233 is the ABC transporter domain; it reads YRLEGVGKEY…AGELYDQHRP (224 aa). 46–53 is an ATP binding site; the sequence is GASGSGKS.

This sequence belongs to the ABC transporter superfamily. Lipoprotein translocase (TC 3.A.1.125) family. The complex is composed of two ATP-binding proteins (LolD) and two transmembrane proteins (LolC and LolE).

It is found in the cell inner membrane. In terms of biological role, part of the ABC transporter complex LolCDE involved in the translocation of mature outer membrane-directed lipoproteins, from the inner membrane to the periplasmic chaperone, LolA. Responsible for the formation of the LolA-lipoprotein complex in an ATP-dependent manner. This is Lipoprotein-releasing system ATP-binding protein LolD from Nitratidesulfovibrio vulgaris (strain ATCC 29579 / DSM 644 / CCUG 34227 / NCIMB 8303 / VKM B-1760 / Hildenborough) (Desulfovibrio vulgaris).